A 550-amino-acid chain; its full sequence is Glucose-6-phosphate isomerase (550 aa).

The Proton donor role is filled by glutamate 356. Active-site residues include histidine 387 and lysine 515.

This sequence belongs to the GPI family.

It localises to the cytoplasm. It carries out the reaction alpha-D-glucose 6-phosphate = beta-D-fructose 6-phosphate. Its pathway is carbohydrate biosynthesis; gluconeogenesis. It functions in the pathway carbohydrate degradation; glycolysis; D-glyceraldehyde 3-phosphate and glycerone phosphate from D-glucose: step 2/4. Functionally, catalyzes the reversible isomerization of glucose-6-phosphate to fructose-6-phosphate. This is Glucose-6-phosphate isomerase from Vibrio campbellii (strain ATCC BAA-1116).